A 248-amino-acid polypeptide reads, in one-letter code: Phycocyanobilin:ferredoxin oxidoreductase (248 aa).

Belongs to the HY2 family.

It catalyses the reaction (2R,3Z)-phycocyanobilin + 4 oxidized [2Fe-2S]-[ferredoxin] = biliverdin IXalpha + 4 reduced [2Fe-2S]-[ferredoxin] + 4 H(+). In terms of biological role, catalyzes the four-electron reduction of biliverdin IX-alpha (2-electron reduction at both the A and D rings); the reaction proceeds via an isolatable 2-electron intermediate, 181,182-dihydrobiliverdin. This Synechococcus elongatus (strain ATCC 33912 / PCC 7942 / FACHB-805) (Anacystis nidulans R2) protein is Phycocyanobilin:ferredoxin oxidoreductase (pcyA).